The sequence spans 407 residues: Mitochondrial protein import protein mas5 (407 aa).

The 63-residue stretch at 6-68 folds into the J domain; that stretch reads KLYEVLNVDV…EKRATYDRFG (63 aa). Substrate is bound by residues leucine 110 and 129–131; that span reads LAL. The CR-type zinc-finger motif lies at 124–207; that stretch reads GKTTKLALQK…CDGAKVISQR (84 aa). Zn(2+)-binding residues include cysteine 137, cysteine 140, cysteine 153, cysteine 156, cysteine 179, cysteine 182, cysteine 195, and cysteine 198. CXXCXGXG motif repeat units lie at residues 137–144, 153–160, 179–186, and 195–202; these read CPKCSGRG, CASCNGSG, CPDCNGAG, and CKECDGAK. Substrate-binding positions include 209–210 and 241–243; these read IL and VIF. Residues 375 to 407 form a disordered region; sequence VRIDNNVDPTTATSMDEDEDEEGGHPGVQCAQQ. Cysteine 404 is subject to Cysteine methyl ester. Residue cysteine 404 is the site of S-farnesyl cysteine attachment. The propeptide at 405 to 407 is removed in mature form; it reads AQQ.

In terms of assembly, homodimer.

It is found in the cytoplasm. The protein localises to the nucleus. In terms of biological role, probably involved in mitochondrial protein import. Plays a role in microtubule cytoskeleton organization. This is Mitochondrial protein import protein mas5 (mas5) from Schizosaccharomyces pombe (strain 972 / ATCC 24843) (Fission yeast).